The chain runs to 344 residues: MLTERQLLILQVIIDDFIRSGQPVGSRTLSKKHEIALSSATIRNEMADLEELGYIEKTHVSSGRVPSEKGYRYYVDHLLSPQRLTKDDIQKIKSIFAERIYELEKVVQKSAQILSDLTNYTSIALGPAVKENKLKRIQIIPLNQQTAVAIIVTDTGHVENHVITVPASVNPSDLEKMVNIFNERLIGVPLVDLKDKIYKKVADVLRKHIRNYDSMLQTIVETLDIPQEEKMFFAGKTNMLNQPEFNDIQKIRPLMKMIEQEKDFYRLLRKHNRKGIQVTIGRENQLSEMENCSLITATYSIGDEQLGTIAILGPTRMEYSRVITILNRVASDLSIALTKWYQNG.

Belongs to the HrcA family.

In terms of biological role, negative regulator of class I heat shock genes (grpE-dnaK-dnaJ and groELS operons). Prevents heat-shock induction of these operons. The protein is Heat-inducible transcription repressor HrcA of Geobacillus stearothermophilus (Bacillus stearothermophilus).